A 512-amino-acid polypeptide reads, in one-letter code: MMLQQVADALATHWLSGILAIATVYLATSYIIDYRRLRAFPGPPLGSFSYLWLAYNALQGRQGSIFYEVMKRYRVPEHSFVRIGPNDLMTDSPEVVRHMSSARSTYLRSSWYRTSKLDPSGDSLLSIMDTAHHDALKAKAGRGYAGRDNRNLESDIDDQLRRLIGLLERKYLSGGGDASSFRPVDMATTMQYFTLDSITKLAYSSAFGFLDLDTDVYGYIKAIRDAAPPIIVCSEWPLAGRIFFSPPFLKMFGPTPKDKSGVGKLMGTLRQVVASRFGPDAKDQPDMLGSFVRNGLSQHQCEQEVILQIVAGSDTTATALRGTLLQLCSTPMVYLKLQKEIDEAVRSGMVGEGVISQETARKLPYLQAVIYEGLRLNPPFTGALMKEVPPGGDEIDGVFIPAGVRIGVSAKGIQMRQDVYGHDVDVFRPERWTECDEQRRMRMAANTELVFGYGRWMCAGKNVAFMELNKVYFELLRRFDFQVVDTKTPVKEESFNVMFSKDMFMKVTKRVL.

A helical membrane pass occupies residues 13-32; it reads HWLSGILAIATVYLATSYII. Cysteine 458 lines the heme pocket.

It belongs to the cytochrome P450 family. It depends on heme as a cofactor.

The protein localises to the membrane. Its pathway is hormone biosynthesis. Its function is as follows. Cytochrome P450 monooxygenase involved in the biosynthesis of abscisic acid (ABA), a phytohormone that acts antagonistically toward salicylic acid (SA), jasmonic acid (JA) and ethylene (ETH) signaling, to impede plant defense responses. During pathogen-host interaction, ABA plays a dual role in disease severity by increasing plant susceptibility and accelerating pathogenesis in the fungus itself. The first step of the pathway catalyzes the reaction from farnesyl diphosphate to alpha-ionylideneethane performed by the alpha-ionylideneethane synthase ABA3 via a three-step reaction mechanism involving 2 neutral intermediates, beta-farnesene and allofarnesene. The cytochrome P450 monooxygenase ABA1 might then be involved in the conversion of alpha-ionylideneethane to alpha-ionylideneacetic acid. Alpha-ionylideneacetic acid is further converted to abscisic acid in 2 steps involving the cytochrome P450 monooxygenase ABA2 and the short-chain dehydrogenase/reductase ABA4, via the intermediates 1'-deoxy-ABA or 1',4'-trans-diol-ABA, depending on the order of action of these 2 enzymes. ABA2 is responsible for the hydroxylation of carbon atom C-1' and ABA4 might be involved in the oxidation of the C-4' carbon atom. This chain is Cytochrome P450 monooxygenase ABA1, found in Pyricularia oryzae (strain Y34) (Rice blast fungus).